The primary structure comprises 2027 residues: Citron Rho-interacting kinase (2027 aa).

N-acetylmethionine is present on methionine 1. A Protein kinase domain is found at 97–360; that stretch reads FEVRSLVGCG…FEGLCCHPFF (264 aa). ATP contacts are provided by residues 103 to 111 and lysine 126; that span reads VGCGHFAEV. Aspartate 221 functions as the Proton acceptor in the catalytic mechanism. Positions 361 to 431 constitute an AGC-kinase C-terminal domain; sequence SKIDWNNIRN…SKALGILGRS (71 aa). Phosphoserine is present on residues serine 433, serine 440, serine 480, and serine 582. Residues 453–1297 are a coiled coil; it reads IKSKELQDSQ…SAREEAAHRK (845 aa). The segment at 1091–1302 is interaction with Rho/Rac; it reads LAVKEHKAEI…AAHRKATDHP (212 aa). Tyrosine 1196 carries the phosphotyrosine modification. Positions 1290–1303 are enriched in basic and acidic residues; sequence REEAAHRKATDHPH. 2 disordered regions span residues 1290–1310 and 1322–1351; these read REEA…PATA and SPEH…EFSR. Over residues 1327–1337 the composition is skewed to low complexity; sequence PSAMSLLAPPS. Residues 1339-1351 show a composition bias toward basic and acidic residues; sequence RRKESSTPEEFSR. Residues 1362 to 1411 form a Phorbol-ester/DAG-type zinc finger; that stretch reads PHRFNVGLNMRATKCAVCLDTVHFGRQASKCLECQVMCHPKCSTCLPATC. Residues 1443 to 1563 form the PH domain; the sequence is SLHLEGWMKV…WVTALESVVA (121 aa). A CNH domain is found at 1591 to 1881; that stretch reads RLDMNCTLPF…RYLGPAISSG (291 aa). An N6-acetyllysine modification is found at lysine 1721. A disordered region spans residues 1905 to 2012; the sequence is ESGTEHHRGP…RGRLPAGAVR (108 aa). Serine 1940 is subject to Phosphoserine. Over residues 1948–2003 the composition is skewed to basic and acidic residues; the sequence is SHPREPSTPHRYREGRTELRRDKSPGRPLEREKSPGRMLSTRRERSPGRLFEDSSR. Residues 1953–1958 carry the SH3-binding motif; the sequence is PSTPHR. The residue at position 1993 (serine 1993) is a Phosphoserine. A Phosphothreonine modification is found at threonine 2013.

The protein belongs to the protein kinase superfamily. AGC Ser/Thr protein kinase family. In terms of assembly, directly interacts with KIF14 depending on the activation state (stronger interaction with the kinase-dead form). Homodimer. Interacts with TTC3.

It localises to the cytoplasm. It catalyses the reaction L-seryl-[protein] + ATP = O-phospho-L-seryl-[protein] + ADP + H(+). The enzyme catalyses L-threonyl-[protein] + ATP = O-phospho-L-threonyl-[protein] + ADP + H(+). Functionally, plays a role in cytokinesis. Required for KIF14 localization to the central spindle and midbody. Putative RHO/RAC effector that binds to the GTP-bound forms of RHO and RAC1. It probably binds p21 with a tighter specificity in vivo. Displays serine/threonine protein kinase activity. Plays an important role in the regulation of cytokinesis and the development of the central nervous system. Phosphorylates MYL9/MLC2. This is Citron Rho-interacting kinase (CIT) from Homo sapiens (Human).